Consider the following 29-residue polypeptide: uncharacterized protein (29 aa).

The interval 1–29 (MFKMKFGDTLPRSDFGTGGNKQAPGLELG) is disordered.

This is an uncharacterized protein from Saccharomyces cerevisiae (strain ATCC 204508 / S288c) (Baker's yeast).